Reading from the N-terminus, the 361-residue chain is [LysW]-lysine hydrolase (361 aa).

Position 67 (histidine 67) interacts with Zn(2+). Aspartate 69 is a catalytic residue. Aspartate 91 serves as a coordination point for Zn(2+). Glutamate 124 (proton acceptor) is an active-site residue. Zn(2+) contacts are provided by glutamate 125, glutamate 148, and histidine 326.

It belongs to the peptidase M20A family. LysK subfamily. Zn(2+) is required as a cofactor. Co(2+) serves as cofactor.

It localises to the cytoplasm. The enzyme catalyses [amino-group carrier protein]-C-terminal-gamma-(L-lysyl)-L-glutamate + H2O = [amino-group carrier protein]-C-terminal-L-glutamate + L-lysine. The protein operates within amino-acid biosynthesis; L-lysine biosynthesis via AAA pathway; L-lysine from L-alpha-aminoadipate (Thermus route): step 5/5. Its function is as follows. Catalyzes the release of L-lysine from [LysW]-gamma-L-lysine. The sequence is that of [LysW]-lysine hydrolase from Thermus thermophilus (strain ATCC 27634 / DSM 579 / HB8).